Here is a 77-residue protein sequence, read N- to C-terminus: U14-theraphotoxin-Cg1b (77 aa).

Residues 1-21 (MKTSVLLVILGIAAITVQCTA) form the signal peptide. Positions 22–49 (SESVEQDSLRTFVDAVLGWNAEMASEAR) are excised as a propeptide. Disulfide bonds link Cys-50/Cys-64, Cys-57/Cys-69, and Cys-63/Cys-75.

The protein belongs to the neurotoxin 10 (Hwtx-1) family. 65 (Jztx-21) subfamily. As to expression, expressed by the venom gland.

The protein localises to the secreted. Probable ion channel inhibitor. The chain is U14-theraphotoxin-Cg1b from Chilobrachys guangxiensis (Chinese earth tiger tarantula).